Consider the following 206-residue polypeptide: Large ribosomal subunit protein uL4 (206 aa).

The disordered stretch occupies residues 43–78 (ARSGNRAQKDREQVKHTTKKPWRQKGTGRARAGMSS). Residues 58–70 (HTTKKPWRQKGTG) show a composition bias toward basic residues.

Belongs to the universal ribosomal protein uL4 family. Part of the 50S ribosomal subunit.

Functionally, one of the primary rRNA binding proteins, this protein initially binds near the 5'-end of the 23S rRNA. It is important during the early stages of 50S assembly. It makes multiple contacts with different domains of the 23S rRNA in the assembled 50S subunit and ribosome. In terms of biological role, forms part of the polypeptide exit tunnel. The protein is Large ribosomal subunit protein uL4 of Polynucleobacter necessarius subsp. necessarius (strain STIR1).